A 149-amino-acid polypeptide reads, in one-letter code: 3-dehydroquinate dehydratase (149 aa).

Y26 serves as the catalytic Proton acceptor. Residues N75, H81, and D88 each contribute to the substrate site. H101 functions as the Proton donor in the catalytic mechanism. Substrate-binding positions include 102 to 103 (LS) and R112.

The protein belongs to the type-II 3-dehydroquinase family. Homododecamer.

It catalyses the reaction 3-dehydroquinate = 3-dehydroshikimate + H2O. The protein operates within metabolic intermediate biosynthesis; chorismate biosynthesis; chorismate from D-erythrose 4-phosphate and phosphoenolpyruvate: step 3/7. In terms of biological role, catalyzes a trans-dehydration via an enolate intermediate. This is 3-dehydroquinate dehydratase from Shewanella woodyi (strain ATCC 51908 / MS32).